A 471-amino-acid chain; its full sequence is P2X purinoceptor 2 (471 aa).

At 1-42 the chain is on the cytoplasmic side; sequence MAAAQPKYPAGATARRLARGCWSALWDYETPKVIVVRNRRLG. 6 cysteine pairs are disulfide-bonded: cysteine 21/cysteine 439, cysteine 125/cysteine 176, cysteine 136/cysteine 159, cysteine 142/cysteine 170, cysteine 226/cysteine 236, and cysteine 270/cysteine 279. The helical transmembrane segment at 43–63 threads the bilayer; it reads VLYRAVQLLILLYFVWYVFIV. At 64–337 the chain is on the extracellular side; the sequence is QKSYQESETG…IVHGQAGKFS (274 aa). Residues lysine 81 and lysine 83 each contribute to the ATP site. A glycan (N-linked (GlcNAc...) asparagine) is linked at asparagine 133. Residue asparagine 194 is glycosylated (N-linked (GlcNAc...) asparagine). Threonine 196 is a binding site for ATP. Positions 296, 300, and 302 each coordinate ATP. Asparagine 310 carries an N-linked (GlcNAc...) asparagine glycan. An ATP-binding site is contributed by lysine 319. The tract at residues 320-333 is pore-forming motif; the sequence is AYGIRIDVIVHGQA. Residues 338–358 traverse the membrane as a helical segment; sequence LIPTIINLATALTSVGVGSFL. At 359-471 the chain is on the cytoplasmic side; the sequence is CDWILLTFMN…PTDPKGLAQL (113 aa). Residues 400–471 are disordered; sequence GQAPPEPGHR…PTDPKGLAQL (72 aa).

Belongs to the P2X receptor family. As to quaternary structure, homotrimer and heterotrimer; functional P2XRs are organized as homomeric and heteromeric trimers. Homotrimer. Forms heterotrimer with P2RX1. Forms heterotrimer with P2RX6. Forms heterotrimer with P2RX3. As to expression, expressed in both the central and peripheral nervous system, as well as in the pituitary gland.

It localises to the cell membrane. The enzyme catalyses Ca(2+)(in) = Ca(2+)(out). It catalyses the reaction K(+)(in) = K(+)(out). The catalysed reaction is Na(+)(in) = Na(+)(out). With respect to regulation, fast activation by external ATP. Exhibits slow desensitization during prolonged ATP activation. Not sensitive to the ATP agonist:alpha/beta-methylene-ATP. In terms of biological role, ATP-gated nonselective transmembrane cation channel permeable to potassium, sodium and calcium. Activation by extracellular ATP induces a variety of cellular responses, such as excitatory postsynaptic responses in sensory neurons, neuromuscular junctions (NMJ) formation, hearing, perception of taste and peristalsis. In the inner ear, regulates sound transduction and auditory neurotransmission, outer hair cell electromotility, inner ear gap junctions, and K(+) recycling. Mediates synaptic transmission between neurons and from neurons to smooth muscle. The chain is P2X purinoceptor 2 from Homo sapiens (Human).